The sequence spans 556 residues: tRNA (guanine(37)-N(1))-methyltransferase (556 aa).

The transit peptide at 1–30 (MIITTKALTVLPHSGLRTTHRSLLARLRHY) directs the protein to the mitochondrion. Residues His249, 287-288 (DL), 315-316 (DA), and Asn346 contribute to the S-adenosyl-L-methionine site. Disordered regions lie at residues 444–465 (QHEE…KMKD) and 524–556 (KKAA…EMQM). 2 stretches are compositionally biased toward basic and acidic residues: residues 454–465 (EEAKRPSNKMKD) and 540–549 (SKPDTKKIEA).

The protein belongs to the class I-like SAM-binding methyltransferase superfamily. TRM5/TYW2 family. Monomer.

It is found in the mitochondrion matrix. Its subcellular location is the nucleus. The protein localises to the cytoplasm. It carries out the reaction guanosine(37) in tRNA + S-adenosyl-L-methionine = N(1)-methylguanosine(37) in tRNA + S-adenosyl-L-homocysteine + H(+). Functionally, specifically methylates the N1 position of guanosine-37 in various cytoplasmic and mitochondrial tRNAs. Methylation is not dependent on the nature of the nucleoside 5' of the target nucleoside. This is the first step in the biosynthesis of wybutosine (yW), a modified base adjacent to the anticodon of tRNAs and required for accurate decoding. The polypeptide is tRNA (guanine(37)-N(1))-methyltransferase (Anopheles gambiae (African malaria mosquito)).